The following is a 174-amino-acid chain: Gamma-crystallin D (174 aa).

Beta/gamma crystallin 'Greek key' domains follow at residues 2–40 (GKIT…RVDS) and 41–83 (GCWM…RLIP). The tract at residues 84-87 (HAGS) is connecting peptide. 2 consecutive Beta/gamma crystallin 'Greek key' domains span residues 88-128 (HRLR…NVLE) and 129-171 (GSWV…RRVI).

This sequence belongs to the beta/gamma-crystallin family.

In terms of biological role, crystallins are the dominant structural components of the vertebrate eye lens. This Bos taurus (Bovine) protein is Gamma-crystallin D (CRYGD).